Here is a 460-residue protein sequence, read N- to C-terminus: Bifunctional protein GlmU (460 aa).

The tract at residues 1 to 230 (MSNNYAIILA…FDESLGVNDR (230 aa)) is pyrophosphorylase. UDP-N-acetyl-alpha-D-glucosamine is bound by residues 9 to 12 (LAAG), Lys-23, Gln-73, and 78 to 79 (GT). Position 103 (Asp-103) interacts with Mg(2+). Positions 140, 155, 170, and 228 each coordinate UDP-N-acetyl-alpha-D-glucosamine. Residue Asn-228 coordinates Mg(2+). Residues 231–251 (VALATAEAVMRKRINEKHMVN) form a linker region. Residues 252–460 (GVTFINPDAT…TRFPFHPSQK (209 aa)) form an N-acetyltransferase region. UDP-N-acetyl-alpha-D-glucosamine-binding residues include Arg-333 and Lys-351. His-363 (proton acceptor) is an active-site residue. Residues Tyr-366 and Asn-377 each contribute to the UDP-N-acetyl-alpha-D-glucosamine site. Residues Ala-380, 386–387 (NY), Ser-405, Ala-423, and Arg-440 each bind acetyl-CoA.

It in the N-terminal section; belongs to the N-acetylglucosamine-1-phosphate uridyltransferase family. This sequence in the C-terminal section; belongs to the transferase hexapeptide repeat family. As to quaternary structure, homotrimer. It depends on Mg(2+) as a cofactor.

The protein resides in the cytoplasm. The catalysed reaction is alpha-D-glucosamine 1-phosphate + acetyl-CoA = N-acetyl-alpha-D-glucosamine 1-phosphate + CoA + H(+). It catalyses the reaction N-acetyl-alpha-D-glucosamine 1-phosphate + UTP + H(+) = UDP-N-acetyl-alpha-D-glucosamine + diphosphate. The protein operates within nucleotide-sugar biosynthesis; UDP-N-acetyl-alpha-D-glucosamine biosynthesis; N-acetyl-alpha-D-glucosamine 1-phosphate from alpha-D-glucosamine 6-phosphate (route II): step 2/2. Its pathway is nucleotide-sugar biosynthesis; UDP-N-acetyl-alpha-D-glucosamine biosynthesis; UDP-N-acetyl-alpha-D-glucosamine from N-acetyl-alpha-D-glucosamine 1-phosphate: step 1/1. It functions in the pathway bacterial outer membrane biogenesis; LPS lipid A biosynthesis. Functionally, catalyzes the last two sequential reactions in the de novo biosynthetic pathway for UDP-N-acetylglucosamine (UDP-GlcNAc). The C-terminal domain catalyzes the transfer of acetyl group from acetyl coenzyme A to glucosamine-1-phosphate (GlcN-1-P) to produce N-acetylglucosamine-1-phosphate (GlcNAc-1-P), which is converted into UDP-GlcNAc by the transfer of uridine 5-monophosphate (from uridine 5-triphosphate), a reaction catalyzed by the N-terminal domain. This is Bifunctional protein GlmU from Streptococcus suis (strain 98HAH33).